A 364-amino-acid polypeptide reads, in one-letter code: Serpentine receptor class epsilon-27 (364 aa).

Helical transmembrane passes span 31-51, 64-84, 125-145, 167-187, 195-215, 257-277, and 290-310; these read VIAS…VVSL, FIIL…GKLI, LLII…FGAV, IFIP…CSCL, IITI…VFFL, LIFS…TLLL, and NALF…IPAW.

Belongs to the nematode receptor-like protein sre family.

It is found in the membrane. The polypeptide is Serpentine receptor class epsilon-27 (sre-27) (Caenorhabditis elegans).